Here is a 128-residue protein sequence, read N- to C-terminus: Cystatin-2 (128 aa).

Positions 1–19 are cleaved as a signal peptide; it reads MSSFKVAVLLIAVYGASQG. The Cystatin domain occupies 29–116; the sequence is QDPTEARFLE…CVAVIYHVPW (88 aa). 2 disulfide bridges follow: Cys-84-Cys-96 and Cys-107-Cys-127.

Belongs to the cystatin family. As to expression, widely expressed. Detected in salivary glands (at protein level), gut (at protein level), ovaries, and Malpighian tubules.

It is found in the secreted. Functionally, inhibitor of cysteine proteinases with broad specificity for mammalian cathepsins, including endopeptidases (cathepsins L and S) and exopeptidases (cathepsins B, C and H). Also inhibits endogenous cathepsin B-like and cathepsin C-like proteinases. Does not inhibit human legumain. May mimic specific host-derived cystatin(s) to interfere with its/their function in controlling cathepsin-mediated proteolysis. Affects the function of antigen-presenting mouse dendritic cells by reducing the production of the pro-inflammatory cytokines TNF and interleukin-12, and proliferation of antigen-specific CD4+ T-cells, suggesting it may suppress the host adaptive immune response. It is noteworthy that immunization of mice with this protein reduces O.moubata survival in infestation experiments. The chain is Cystatin-2 from Ornithodoros moubata (Soft tick).